Consider the following 348-residue polypeptide: Fructose-1,6-bisphosphatase class 1 2 (348 aa).

Mg(2+) contacts are provided by E93, D117, L119, and D120. Residues 120–123 (DGSS), N213, Y244, and K274 contribute to the substrate site. E280 serves as a coordination point for Mg(2+).

This sequence belongs to the FBPase class 1 family. In terms of assembly, homotetramer. Mg(2+) serves as cofactor.

The protein resides in the cytoplasm. It carries out the reaction beta-D-fructose 1,6-bisphosphate + H2O = beta-D-fructose 6-phosphate + phosphate. It participates in carbohydrate biosynthesis; gluconeogenesis. The polypeptide is Fructose-1,6-bisphosphatase class 1 2 (Christiangramia forsetii (strain DSM 17595 / CGMCC 1.15422 / KT0803) (Gramella forsetii)).